A 544-amino-acid polypeptide reads, in one-letter code: Chaperonin GroEL (544 aa).

ATP-binding positions include Thr-30–Pro-33, Lys-51, Asp-87–Thr-91, Gly-415, Asn-479–Ala-481, and Asp-495.

The protein belongs to the chaperonin (HSP60) family. In terms of assembly, forms a cylinder of 14 subunits composed of two heptameric rings stacked back-to-back. Interacts with the co-chaperonin GroES.

It localises to the cytoplasm. It catalyses the reaction ATP + H2O + a folded polypeptide = ADP + phosphate + an unfolded polypeptide.. Its function is as follows. Together with its co-chaperonin GroES, plays an essential role in assisting protein folding. The GroEL-GroES system forms a nano-cage that allows encapsulation of the non-native substrate proteins and provides a physical environment optimized to promote and accelerate protein folding. This chain is Chaperonin GroEL, found in Francisella tularensis subsp. holarctica (strain FTNF002-00 / FTA).